The primary structure comprises 142 residues: Hemoglobin subunit alpha-A (142 aa).

In terms of domain architecture, Globin spans 2–142 (VLSAADKTNV…VGTVLTAKYR (141 aa)). H59 contributes to the O2 binding site. H88 contributes to the heme b binding site.

The protein belongs to the globin family. In terms of assembly, heterotetramer of two alpha chains and two beta chains. In terms of tissue distribution, red blood cells.

In terms of biological role, involved in oxygen transport from the lung to the various peripheral tissues. The sequence is that of Hemoglobin subunit alpha-A (HBAA) from Anser anser anser (Western greylag goose).